The sequence spans 156 residues: Crossover junction endodeoxyribonuclease RuvC (156 aa).

Active-site residues include aspartate 7, glutamate 67, and aspartate 139. Mg(2+) contacts are provided by aspartate 7, glutamate 67, and aspartate 139.

It belongs to the RuvC family. In terms of assembly, homodimer which binds Holliday junction (HJ) DNA. The HJ becomes 2-fold symmetrical on binding to RuvC with unstacked arms; it has a different conformation from HJ DNA in complex with RuvA. In the full resolvosome a probable DNA-RuvA(4)-RuvB(12)-RuvC(2) complex forms which resolves the HJ. Mg(2+) serves as cofactor.

It is found in the cytoplasm. It carries out the reaction Endonucleolytic cleavage at a junction such as a reciprocal single-stranded crossover between two homologous DNA duplexes (Holliday junction).. Its function is as follows. The RuvA-RuvB-RuvC complex processes Holliday junction (HJ) DNA during genetic recombination and DNA repair. Endonuclease that resolves HJ intermediates. Cleaves cruciform DNA by making single-stranded nicks across the HJ at symmetrical positions within the homologous arms, yielding a 5'-phosphate and a 3'-hydroxyl group; requires a central core of homology in the junction. The consensus cleavage sequence is 5'-(A/T)TT(C/G)-3'. Cleavage occurs on the 3'-side of the TT dinucleotide at the point of strand exchange. HJ branch migration catalyzed by RuvA-RuvB allows RuvC to scan DNA until it finds its consensus sequence, where it cleaves and resolves the cruciform DNA. The chain is Crossover junction endodeoxyribonuclease RuvC from Sphingopyxis alaskensis (strain DSM 13593 / LMG 18877 / RB2256) (Sphingomonas alaskensis).